The primary structure comprises 477 residues: Glycogen synthase 1 (477 aa).

Residue Lys15 participates in ADP-alpha-D-glucose binding.

The protein belongs to the glycosyltransferase 1 family. Bacterial/plant glycogen synthase subfamily.

It catalyses the reaction [(1-&gt;4)-alpha-D-glucosyl](n) + ADP-alpha-D-glucose = [(1-&gt;4)-alpha-D-glucosyl](n+1) + ADP + H(+). The protein operates within glycan biosynthesis; glycogen biosynthesis. Synthesizes alpha-1,4-glucan chains using ADP-glucose. The protein is Glycogen synthase 1 (glgA1) of Synechocystis sp. (strain ATCC 27184 / PCC 6803 / Kazusa).